Reading from the N-terminus, the 461-residue chain is Hydroxyproline dehydrogenase (461 aa).

Residue Lys310 is modified to N6-acetyllysine.

The protein belongs to the proline oxidase family. It depends on FAD as a cofactor.

The enzyme catalyses trans-4-hydroxy-L-proline + a quinone = (3R,5S)-1-pyrroline-3-hydroxy-5-carboxylate + a quinol + H(+). It catalyses the reaction L-proline + a quinone = (S)-1-pyrroline-5-carboxylate + a quinol + H(+). The protein operates within amino-acid degradation; L-proline degradation into L-glutamate; L-glutamate from L-proline: step 1/2. Dehydrogenase that converts trans-4-L-hydroxyproline to delta-1-pyrroline-3-hydroxy-5-carboxylate (Hyp) using ubiquinone-10 as the terminal electron acceptor. Can also use proline as a substrate but with a very much lower efficiency. Does not react with other diastereomers of Hyp: trans-4-D-hydroxyproline and cis-4-L-hydroxyproline. Ubiquininone analogs such as menadione, duroquinone and ubiquinone-1 react more efficiently than oxygen as the terminal electron acceptor during catalysis. The protein is Hydroxyproline dehydrogenase of Bos taurus (Bovine).